We begin with the raw amino-acid sequence, 405 residues long: 3-hydroxy-3-methylglutaryl-coenzyme A reductase (405 aa).

Catalysis depends on charge relay system residues Glu101 and Asp305. The Proton donor role is filled by His400.

Belongs to the HMG-CoA reductase family. Homodimer.

It is found in the cytoplasm. It carries out the reaction (R)-mevalonate + 2 NADP(+) + CoA = (3S)-3-hydroxy-3-methylglutaryl-CoA + 2 NADPH + 2 H(+). It functions in the pathway metabolic intermediate biosynthesis; (R)-mevalonate biosynthesis; (R)-mevalonate from acetyl-CoA: step 3/3. Its activity is regulated as follows. Is competitively inhibited by lovastatin (formerly called mevinolin). Lovastatin also blocks the growth of H.salinarum, and this effect is reversed by addition of mevalonate, indicating the critical role that the mevalonate pathway plays in isoprenoid biosynthesis by these archaea. Its function is as follows. Catalyzes the NADPH-dependent reductive deacylation of (S)-3-hydroxy-3-methylglutaryl-CoA (HMG-CoA) to (R)-mevalonate. Cannot use NADH instead of NADPH. Functions in the mevalonate (MVA) pathway leading to isopentenyl diphosphate (IPP), a key precursor for the biosynthesis of isoprenoid compounds such as archaeal membrane lipids. This Halobacterium salinarum (strain ATCC 29341 / DSM 671 / R1) protein is 3-hydroxy-3-methylglutaryl-coenzyme A reductase (hmgA).